A 148-amino-acid chain; its full sequence is Large ribosomal subunit protein bL9 (148 aa).

The protein belongs to the bacterial ribosomal protein bL9 family.

In terms of biological role, binds to the 23S rRNA. This chain is Large ribosomal subunit protein bL9, found in Staphylococcus aureus (strain bovine RF122 / ET3-1).